A 109-amino-acid polypeptide reads, in one-letter code: Iron-sulfur cluster assembly protein CyaY (109 aa).

This sequence belongs to the frataxin family.

Involved in iron-sulfur (Fe-S) cluster assembly. May act as a regulator of Fe-S biogenesis. The chain is Iron-sulfur cluster assembly protein CyaY from Bordetella avium (strain 197N).